A 579-amino-acid chain; its full sequence is Methionine--tRNA ligase (579 aa).

Positions 14 to 24 (PYINGVKHLGN) match the 'HIGH' region motif. Positions 146, 149, 159, and 162 each coordinate Zn(2+). A 'KMSKS' region motif is present at residues 346–350 (KFSTS). Thr-349 contacts ATP.

This sequence belongs to the class-I aminoacyl-tRNA synthetase family. MetG type 1 subfamily. Monomer. The cofactor is Zn(2+).

It localises to the cytoplasm. It carries out the reaction tRNA(Met) + L-methionine + ATP = L-methionyl-tRNA(Met) + AMP + diphosphate. Is required not only for elongation of protein synthesis but also for the initiation of all mRNA translation through initiator tRNA(fMet) aminoacylation. This is Methionine--tRNA ligase from Hyphomonas neptunium (strain ATCC 15444).